The following is a 215-amino-acid chain: MFPQSLIDRILAELLAQDVAATDTDPALVPVGVSNRHVHLSRPDMDALFGPGASLTRMKAMKQPGQYAAAETVTLRGPKGDIGKVRVLGPLRKETQIEISVADGFTLGIKPPMRMSGKLDGSAGLTVIGPAGSVTKEAGVIVALRHIHMRPEDAVRLGVKTGDSVDVVVSGPRGGVMHNVTIRSDEVSATEMHIDVEEANAFGLQNDALVRVRKV.

CoA is bound at residue 33–35 (VSN). Zn(2+)-binding residues include H37 and H39. CoA contacts are provided by M61, K79, and R86. A phosphate-binding site is contributed by R92. E98 contributes to the Zn(2+) binding site. CoA is bound at residue F105. 3 residues coordinate Zn(2+): H146, H148, and H193. Residue N200 participates in CoA binding.

This sequence belongs to the PduL family. The cofactor is Zn(2+).

It is found in the bacterial microcompartment. The catalysed reaction is propanoyl-CoA + phosphate = propanoyl phosphate + CoA. It functions in the pathway polyol metabolism; 1,2-propanediol degradation. In terms of biological role, involved in 1,2-propanediol (1,2-PD) utilization within the bacterial microcompartment (BMC) dedicated to 1,2-PD degradation by catalyzing the conversion of propanoyl-CoA to propanoyl-phosphate. This is Phosphate propanoyltransferase (pduL) from Rhodobacter capsulatus (strain ATCC BAA-309 / NBRC 16581 / SB1003).